Consider the following 1142-residue polypeptide: SNF1-activating kinase 1 (1142 aa).

Residues E22–S41 form a disordered region. T43 carries the post-translational modification Phosphothreonine. Over residues Q82–K93 the composition is skewed to polar residues. Residues Q82–S107 form a disordered region. Positions T94 to S107 are enriched in low complexity. In terms of domain architecture, Protein kinase spans Y133–V448. ATP-binding positions include L139 to V147 and K162. D277 (proton acceptor) is an active-site residue. Disordered regions lie at residues S634–Q678, N694–I799, S825–E875, K919–S971, S1005–T1027, and S1066–P1142. Positions S640–L656 are enriched in polar residues. Residues N694–S706 show a composition bias toward low complexity. Polar residues predominate over residues Y707–L741. Residues T742–E751 show a composition bias toward basic and acidic residues. Residues N785–I799 are compositionally biased toward polar residues. Low complexity-rich tracts occupy residues S835 to S868 and S920 to S936. Over residues S958–S971 the composition is skewed to polar residues. S964 carries the phosphoserine modification. Positions N1096 to Q1111 are enriched in basic and acidic residues. S1126 is subject to Phosphoserine. Residues N1133 to P1142 are compositionally biased toward basic and acidic residues.

The protein belongs to the protein kinase superfamily. Ser/Thr protein kinase family. Associates with the SNF1 kinase complex. Interacts with SNF1 and REG1. In terms of processing, autophosphorylated.

The protein resides in the cytoplasm. The enzyme catalyses L-seryl-[protein] + ATP = O-phospho-L-seryl-[protein] + ADP + H(+). It catalyses the reaction L-threonyl-[protein] + ATP = O-phospho-L-threonyl-[protein] + ADP + H(+). Serine/threonine-protein kinase that phosphorylates SNF1, the catalytic subunit of the SNF1 kinase complex. Acts as an activator of the SNF1 kinase complex and controls its nuclear localization upon glucose and nitrogen depletion. Also required for SNF1 kinase activation under other stress conditions like alkaline pH or presence of cadmium. This Saccharomyces cerevisiae (strain ATCC 204508 / S288c) (Baker's yeast) protein is SNF1-activating kinase 1 (SAK1).